The chain runs to 469 residues: MTDRARLRLHDTAAGVVRDFVPLRPGHVSIYLCGATVQGLPHIGHVRSGVAFDILRRWLLARGYDVAFIRNVTDIEDKILAKAAAAGRPWWEWAATHERAFTAAYDALDVLPPSAEPRATGHITQMIEMIERLIQAGHAYTGGGDVYFDVLSYPEYGQLSGHKIDDVHQGEGVAAGKRDQRDFTLWKGEKPGEPSWPTPWGRGRPGWHLECSAMARSYLGPEFDIHCGGMDLVFPHHENEIAQSRAAGDGFARYWLHNGWVTMGGEKMSKSLGNVLSMPAMLQRVRPAELRYYLGSAHYRSMLEFSETAMQDAVKAYVGLEDFLHRVRTRVGAVCPGDPTPRFAEALDDDLSVPIALAEIHHVRAEGNRALDAGDHDGALRSASAIRAMMGILGCDPLDQRWESRDETSAALAAVDVLVQAELQNREKAREQRNWALADEIRGRLKRAGIEVTDTAEGPQWSLLGGDTK.

Zn(2+) is bound at residue cysteine 33. A 'HIGH' region motif is present at residues 35 to 45; sequence ATVQGLPHIGH. The Zn(2+) site is built by cysteine 211, histidine 236, and glutamate 240. The 'KMSKS' region signature appears at 267–271; that stretch reads KMSKS. Lysine 270 is an ATP binding site.

This sequence belongs to the class-I aminoacyl-tRNA synthetase family. Monomer. Requires Zn(2+) as cofactor.

The protein resides in the cytoplasm. The enzyme catalyses tRNA(Cys) + L-cysteine + ATP = L-cysteinyl-tRNA(Cys) + AMP + diphosphate. This chain is Cysteine--tRNA ligase (cysS), found in Mycobacterium tuberculosis (strain CDC 1551 / Oshkosh).